Consider the following 206-residue polypeptide: Small ribosomal subunit protein uS5 (206 aa).

Polar residues predominate over residues 1–15 (MTDTPTKQEIQSKND). Residues 1–50 (MTDTPTKQEIQSKNDNVPGATPVEQKKNNRNDRKRNRRGDSKNLERDSDW) form a disordered region. Residues 38 to 50 (RGDSKNLERDSDW) are compositionally biased toward basic and acidic residues. Residues 50-113 (WQERVVQIRR…SDGKKNLVRV (64 aa)) enclose the S5 DRBM domain.

This sequence belongs to the universal ribosomal protein uS5 family. Part of the 30S ribosomal subunit. Contacts proteins S4 and S8.

Functionally, with S4 and S12 plays an important role in translational accuracy. Its function is as follows. Located at the back of the 30S subunit body where it stabilizes the conformation of the head with respect to the body. This chain is Small ribosomal subunit protein uS5, found in Prochlorococcus marinus (strain MIT 9301).